The chain runs to 418 residues: Glutamyl-tRNA reductase (418 aa).

Residues 49–52 (TCNR), Ser109, 114–116 (EPQ), and Gln120 each bind substrate. Residue Cys50 is the Nucleophile of the active site. 189–194 (GAGETI) contacts NADP(+).

It belongs to the glutamyl-tRNA reductase family. As to quaternary structure, homodimer.

It catalyses the reaction (S)-4-amino-5-oxopentanoate + tRNA(Glu) + NADP(+) = L-glutamyl-tRNA(Glu) + NADPH + H(+). The protein operates within porphyrin-containing compound metabolism; protoporphyrin-IX biosynthesis; 5-aminolevulinate from L-glutamyl-tRNA(Glu): step 1/2. Its function is as follows. Catalyzes the NADPH-dependent reduction of glutamyl-tRNA(Glu) to glutamate 1-semialdehyde (GSA). This is Glutamyl-tRNA reductase from Shigella flexneri.